The chain runs to 227 residues: PKHD-type hydroxylase Pden_4677 (227 aa).

Positions 78–178 (HILPPMFNRY…RWASFFWAQS (101 aa)) constitute a Fe2OG dioxygenase domain. Histidine 96, aspartate 98, and histidine 159 together coordinate Fe cation. Arginine 169 provides a ligand contact to 2-oxoglutarate.

Requires Fe(2+) as cofactor. L-ascorbate serves as cofactor.

The polypeptide is PKHD-type hydroxylase Pden_4677 (Paracoccus denitrificans (strain Pd 1222)).